The sequence spans 202 residues: Na(+)-translocating NADH-quinone reductase subunit E (202 aa).

The next 6 helical transmembrane spans lie at 11–31, 39–59, 79–99, 114–134, 144–164, and 180–200; these read SIFI…YLAV, MGLG…NNLL, LTFV…QILE, GIFL…LFMV, VTFG…LAGI, and LGIT…FSGI.

Belongs to the NqrDE/RnfAE family. In terms of assembly, composed of six subunits; NqrA, NqrB, NqrC, NqrD, NqrE and NqrF.

The protein resides in the cell inner membrane. It carries out the reaction a ubiquinone + n Na(+)(in) + NADH + H(+) = a ubiquinol + n Na(+)(out) + NAD(+). In terms of biological role, NQR complex catalyzes the reduction of ubiquinone-1 to ubiquinol by two successive reactions, coupled with the transport of Na(+) ions from the cytoplasm to the periplasm. NqrA to NqrE are probably involved in the second step, the conversion of ubisemiquinone to ubiquinol. This is Na(+)-translocating NADH-quinone reductase subunit E from Maridesulfovibrio salexigens (strain ATCC 14822 / DSM 2638 / NCIMB 8403 / VKM B-1763) (Desulfovibrio salexigens).